Here is a 330-residue protein sequence, read N- to C-terminus: MATFPVVDMDLINGEERAATLEKINDACENWGFFELVNHGISTELLDTVEKMNKDHYKKTMEQRFKEMVAAKGLEAVQSEIHYLDWESTFFLRHLPSSNISEIPDLEEDYRKTMKEFAVELEKLAEKLLDLLCENLGLEKGYLKKAFYGSKGPNFGTKVSNYPPCPKPDLIKGLRAHTDAGGIILLFQDDKVSGLQLLKDGEWMDVPPVHHSIVINLGDQIEVITNGKYKSIMHRVIAQSDGTRMSIASFYNPGDDAFISPAPALLEEKSEVSPTYPKFLFDDYMKLYSGLKFQAKEPRFEAMKARETTPVETARGLRAVRWNTTKRNQN.

Positions 153–253 (PNFGTKVSNY…RMSIASFYNP (101 aa)) constitute a Fe2OG dioxygenase domain. The Fe cation site is built by His177, Asp179, and His234.

Belongs to the iron/ascorbate-dependent oxidoreductase family. In terms of assembly, monomer. Fe cation is required as a cofactor.

It carries out the reaction 1-aminocyclopropane-1-carboxylate + L-ascorbate + O2 = ethene + L-dehydroascorbate + hydrogen cyanide + CO2 + 2 H2O. It functions in the pathway alkene biosynthesis; ethylene biosynthesis via S-adenosyl-L-methionine; ethylene from S-adenosyl-L-methionine: step 2/2. This Malus domestica (Apple) protein is 1-aminocyclopropane-1-carboxylate oxidase 2 (ACO2).